The sequence spans 528 residues: Biotin carboxylase 1, chloroplastic (528 aa).

Residues 1–51 constitute a chloroplast transit peptide; it reads MEATLPVCKSVTSTPGLFMGKTSGIRSSQCSFMMGNKVNFPRQRAQTAHVH. ATP contacts are provided by residues Lys179, Lys221, 227 to 228, 263 to 266, and His271; these read GG and EKYV. The 198-residue stretch at 183 to 380 folds into the ATP-grasp domain; that stretch reads RETMKKAGVP…LIEEQIRVAM (198 aa). Lys300 is a hydrogencarbonate binding site. The ATP site is built by Glu338 and Glu351. Positions 338, 351, and 353 each coordinate Mg(2+). Mn(2+) contacts are provided by Glu338, Glu351, and Asn353. Hydrogencarbonate is bound by residues Arg355, Val358, and Arg401. Residue Arg355 is part of the active site. A biotin-binding site is contributed by Arg401.

In terms of assembly, acetyl-CoA carboxylase is a heterohexamer composed of biotin carboxyl carrier protein, biotin carboxylase and two subunits each of ACCase subunit alpha and ACCase plastid-coded subunit beta (accD). Mg(2+) serves as cofactor. The cofactor is Mn(2+).

Its subcellular location is the plastid. It is found in the chloroplast. It carries out the reaction N(6)-biotinyl-L-lysyl-[protein] + hydrogencarbonate + ATP = N(6)-carboxybiotinyl-L-lysyl-[protein] + ADP + phosphate + H(+). Its pathway is lipid metabolism; malonyl-CoA biosynthesis; malonyl-CoA from acetyl-CoA: step 1/1. Functionally, this protein is a component of the acetyl coenzyme A carboxylase complex; first, biotin carboxylase catalyzes the carboxylation of the carrier protein and then the transcarboxylase transfers the carboxyl group to form malonyl-CoA. The sequence is that of Biotin carboxylase 1, chloroplastic from Populus trichocarpa (Western balsam poplar).